The following is a 276-amino-acid chain: Orotidine 5'-phosphate decarboxylase (276 aa).

K93 functions as the Proton donor in the catalytic mechanism.

It belongs to the OMP decarboxylase family. Type 2 subfamily.

It catalyses the reaction orotidine 5'-phosphate + H(+) = UMP + CO2. The protein operates within pyrimidine metabolism; UMP biosynthesis via de novo pathway; UMP from orotate: step 2/2. The chain is Orotidine 5'-phosphate decarboxylase from Halorubrum lacusprofundi (strain ATCC 49239 / DSM 5036 / JCM 8891 / ACAM 34).